The sequence spans 253 residues: Flap endonuclease Xni (253 aa).

Asp105 contributes to the Mg(2+) binding site. The 5'-3' exonuclease domain maps to 162–251 (ERHQLLDYIA…HLKLSDLRVN (90 aa)). The K(+) site is built by Leu172, Pro181, Ile183, and Ile186. The tract at residues 185-190 (GIGPKS) is interaction with DNA.

The protein belongs to the Xni family. Requires Mg(2+) as cofactor. It depends on K(+) as a cofactor.

Its function is as follows. Has flap endonuclease activity. During DNA replication, flap endonucleases cleave the 5'-overhanging flap structure that is generated by displacement synthesis when DNA polymerase encounters the 5'-end of a downstream Okazaki fragment. The sequence is that of Flap endonuclease Xni from Shewanella amazonensis (strain ATCC BAA-1098 / SB2B).